Consider the following 401-residue polypeptide: Lipid-A-disaccharide synthase (401 aa).

The protein belongs to the LpxB family.

It catalyses the reaction a lipid X + a UDP-2-N,3-O-bis[(3R)-3-hydroxyacyl]-alpha-D-glucosamine = a lipid A disaccharide + UDP + H(+). Its pathway is bacterial outer membrane biogenesis; LPS lipid A biosynthesis. Its function is as follows. Condensation of UDP-2,3-diacylglucosamine and 2,3-diacylglucosamine-1-phosphate to form lipid A disaccharide, a precursor of lipid A, a phosphorylated glycolipid that anchors the lipopolysaccharide to the outer membrane of the cell. This Ruegeria pomeroyi (strain ATCC 700808 / DSM 15171 / DSS-3) (Silicibacter pomeroyi) protein is Lipid-A-disaccharide synthase.